Reading from the N-terminus, the 293-residue chain is 4-hydroxy-tetrahydrodipicolinate synthase (293 aa).

T44 is a binding site for pyruvate. Residue Y132 is the Proton donor/acceptor of the active site. The active-site Schiff-base intermediate with substrate is K162. I204 contacts pyruvate.

This sequence belongs to the DapA family. Homotetramer; dimer of dimers.

The protein localises to the cytoplasm. It catalyses the reaction L-aspartate 4-semialdehyde + pyruvate = (2S,4S)-4-hydroxy-2,3,4,5-tetrahydrodipicolinate + H2O + H(+). It functions in the pathway amino-acid biosynthesis; L-lysine biosynthesis via DAP pathway; (S)-tetrahydrodipicolinate from L-aspartate: step 3/4. Functionally, catalyzes the condensation of (S)-aspartate-beta-semialdehyde [(S)-ASA] and pyruvate to 4-hydroxy-tetrahydrodipicolinate (HTPA). In Erythrobacter litoralis (strain HTCC2594), this protein is 4-hydroxy-tetrahydrodipicolinate synthase.